The primary structure comprises 309 residues: Small ribosomal subunit biogenesis GTPase RsgA (309 aa).

In terms of domain architecture, CP-type G spans 64 to 225; it reads ENELVRPPLA…VADTPGFSTY (162 aa). Residues 113–116 and 168–176 contribute to the GTP site; these read SKTD and GQTGAGKST. Zn(2+) contacts are provided by Cys-249, Cys-254, His-256, and Cys-262.

Belongs to the TRAFAC class YlqF/YawG GTPase family. RsgA subfamily. Monomer. Associates with 30S ribosomal subunit, binds 16S rRNA. Zn(2+) is required as a cofactor.

It is found in the cytoplasm. Functionally, one of several proteins that assist in the late maturation steps of the functional core of the 30S ribosomal subunit. Helps release RbfA from mature subunits. May play a role in the assembly of ribosomal proteins into the subunit. Circularly permuted GTPase that catalyzes slow GTP hydrolysis, GTPase activity is stimulated by the 30S ribosomal subunit. This chain is Small ribosomal subunit biogenesis GTPase RsgA, found in Pediococcus pentosaceus (strain ATCC 25745 / CCUG 21536 / LMG 10740 / 183-1w).